Reading from the N-terminus, the 144-residue chain is Superoxide dismutase [Mn], mitochondrial (144 aa).

Positions 10, 58, and 143 each coordinate Mn(2+).

Belongs to the iron/manganese superoxide dismutase family. As to quaternary structure, homotetramer. It depends on Mn(2+) as a cofactor.

The protein localises to the mitochondrion matrix. The enzyme catalyses 2 superoxide + 2 H(+) = H2O2 + O2. Destroys superoxide anion radicals which are normally produced within the cells and which are toxic to biological systems. The polypeptide is Superoxide dismutase [Mn], mitochondrial (Petromyzon marinus (Sea lamprey)).